The sequence spans 146 residues: Ribosome-binding factor A (146 aa).

Residues 125-146 form a disordered region; the sequence is RDLDADDDKTKDDRAKDDKDSE.

It belongs to the RbfA family. Monomer. Binds 30S ribosomal subunits, but not 50S ribosomal subunits or 70S ribosomes.

The protein resides in the cytoplasm. In terms of biological role, one of several proteins that assist in the late maturation steps of the functional core of the 30S ribosomal subunit. Associates with free 30S ribosomal subunits (but not with 30S subunits that are part of 70S ribosomes or polysomes). Required for efficient processing of 16S rRNA. May interact with the 5'-terminal helix region of 16S rRNA. This chain is Ribosome-binding factor A, found in Mesorhizobium japonicum (strain LMG 29417 / CECT 9101 / MAFF 303099) (Mesorhizobium loti (strain MAFF 303099)).